A 129-amino-acid chain; its full sequence is Snaclec rhodocetin subunit beta (129 aa).

A C-type lectin domain is found at 3-125; sequence RCPTTWSASK…EEKNAFLCKF (123 aa). Cystine bridges form between Cys4–Cys15, Cys32–Cys123, and Cys98–Cys115.

In terms of assembly, heterotetramer of subunit alpha, beta, gamma and delta; only the gamma and the delta subunits are disulfide-linked. Alpha-beta heterodimer and gamma-delta heterodimer associate orthogonally, giving a cruciform conformation. This heterotetramer may covalently dimerizes thanks to the gamma subunit. Expressed by the venom gland.

The protein resides in the secreted. Its function is as follows. Potent inhibitor of collagen-induced platelet aggregation. It acts by binding to the integrin alpha2A domain and blocks collagen binding to integrin alpha-2/beta-1 (ITGA2/ITGB1). The gamma/delta subunits mainly contribute to this activity. In Calloselasma rhodostoma (Malayan pit viper), this protein is Snaclec rhodocetin subunit beta.